The following is a 664-amino-acid chain: MAPKSCQESEDKQVSPAPAGVQPDSSDLGSPVGTPVDRVAPSYSQSAKLYTSTPMGCSVKQQLAPETLDPRTLRLLWEQRELEIQALRWAVQNGHNARYSSILQEVAGVPSERNSKSQDKFLRNQVQKLTLELKAQKEQAQQEKQQLEEKLQQNLWAKQQLEAELQTFQKSCLLQLARSSWVGRVLRSQTGSVEVVTTEVLRDPSDFSESAEIPTSGEGFPLEDVDWNSIAQRYPNLFSNLNFYSDQKQSQPPTSETYTLDSEGATKHTEKPTKILEWSALPLLDTSSSERTQSDTSSCPIALHSGAKKTTGHPSQGTNLASSEQMQEHTRSFSGYTEDLCKSHSPSCSKTVLESYTDLHHPYTRPQLNPFGCCLKIAAVSHREKFIRVINQSQAETIDLGGFVLQQLVRDFPVCMYRFPPGTLLAPQHHITVWGEGTSRTKKQLPVASGQDPFQFQSSRGCVTVLVNPQGQVLSEHQATPCVTLGSKIFTDNTDWSIDCFPLSESEPDVHPGEQQCRPSSPQKGRAKDAGARRKKPGPGVRQHRHSSTSGLRASRTLHPTETRDILPLLSSRKLLPSGEVLTQQEGVKAETSELLPVIPECPSRLCLGEDSLGRQEYKVQVCRKSVDLSCPMVALSVQNTAESRYGFRFLCYPPITEELCRRL.

Residues 1-40 (MAPKSCQESEDKQVSPAPAGVQPDSSDLGSPVGTPVDRVA) are disordered. Positions 118–169 (QDKFLRNQVQKLTLELKAQKEQAQQEKQQLEEKLQQNLWAKQQLEAELQTFQ) form a coiled coil. A compositionally biased stretch (polar residues) spans 245 to 260 (SDQKQSQPPTSETYTL). 2 disordered regions span residues 245 to 272 (SDQKQSQPPTSETYTLDSEGATKHTEKP) and 286 to 329 (TSSS…MQEH). Positions 286–298 (TSSSERTQSDTSS) are enriched in low complexity. The span at 312-325 (GHPSQGTNLASSEQ) shows a compositional bias: polar residues. The LTD domain occupies 362 to 481 (PYTRPQLNPF…QVLSEHQATP (120 aa)). Residues 504 to 563 (SESEPDVHPGEQQCRPSSPQKGRAKDAGARRKKPGPGVRQHRHSSTSGLRASRTLHPTET) are disordered. Over residues 533–547 (RRKKPGPGVRQHRHS) the composition is skewed to basic residues.

In Mus musculus (Mouse), this protein is Lamin tail domain-containing protein 2 (Lmntd2).